A 417-amino-acid polypeptide reads, in one-letter code: Serine hydroxymethyltransferase 3 (417 aa).

(6S)-5,6,7,8-tetrahydrofolate contacts are provided by residues L121 and G125–L127. The residue at position 229 (K229) is an N6-(pyridoxal phosphate)lysine. S354–F356 contributes to the (6S)-5,6,7,8-tetrahydrofolate binding site.

The protein belongs to the SHMT family. In terms of assembly, homodimer. Requires pyridoxal 5'-phosphate as cofactor.

Its subcellular location is the cytoplasm. It catalyses the reaction (6R)-5,10-methylene-5,6,7,8-tetrahydrofolate + glycine + H2O = (6S)-5,6,7,8-tetrahydrofolate + L-serine. Its pathway is one-carbon metabolism; tetrahydrofolate interconversion. It participates in amino-acid biosynthesis; glycine biosynthesis; glycine from L-serine: step 1/1. Catalyzes the reversible interconversion of serine and glycine with tetrahydrofolate (THF) serving as the one-carbon carrier. This reaction serves as the major source of one-carbon groups required for the biosynthesis of purines, thymidylate, methionine, and other important biomolecules. Also exhibits THF-independent aldolase activity toward beta-hydroxyamino acids, producing glycine and aldehydes, via a retro-aldol mechanism. This chain is Serine hydroxymethyltransferase 3, found in Pseudomonas aeruginosa (strain ATCC 15692 / DSM 22644 / CIP 104116 / JCM 14847 / LMG 12228 / 1C / PRS 101 / PAO1).